Consider the following 955-residue polypeptide: Leucine--tRNA ligase (955 aa).

A 'HIGH' region motif is present at residues Pro51–His61. The 'KMSKS' region signature appears at Lys647–Ser651. Lys650 contacts ATP.

Belongs to the class-I aminoacyl-tRNA synthetase family.

It localises to the cytoplasm. It carries out the reaction tRNA(Leu) + L-leucine + ATP = L-leucyl-tRNA(Leu) + AMP + diphosphate. This chain is Leucine--tRNA ligase, found in Methanococcus maripaludis (strain C7 / ATCC BAA-1331).